The chain runs to 110 residues: Mobility group protein 1B (110 aa).

The segment at residues 5–71 (PKRPLSAYML…NYIRALQEYE (67 aa)) is a DNA-binding region (HMG box). Positions 71-81 (ERNGGGGDDKG) are enriched in basic and acidic residues. A disordered region spans residues 71–110 (ERNGGGGDDKGKKRKGAAPKKGAGKKSKKGAHSDDDGDSE). Basic residues predominate over residues 82–100 (KKRKGAAPKKGAGKKSKKG).

This sequence belongs to the HMGB family.

It localises to the nucleus. Its subcellular location is the chromosome. In terms of biological role, found in condensed chromomeres. Binds preferentially to AT-rich DNA. The sequence is that of Mobility group protein 1B (HMG1B) from Chironomus tentans (Midge).